The sequence spans 239 residues: Ribonuclease PH (239 aa).

Residues Arg86 and 124–126 (GTR) each bind phosphate.

Belongs to the RNase PH family. As to quaternary structure, homohexameric ring arranged as a trimer of dimers.

The enzyme catalyses tRNA(n+1) + phosphate = tRNA(n) + a ribonucleoside 5'-diphosphate. Phosphorolytic 3'-5' exoribonuclease that plays an important role in tRNA 3'-end maturation. Removes nucleotide residues following the 3'-CCA terminus of tRNAs; can also add nucleotides to the ends of RNA molecules by using nucleoside diphosphates as substrates, but this may not be physiologically important. Probably plays a role in initiation of 16S rRNA degradation (leading to ribosome degradation) during starvation. In Aromatoleum aromaticum (strain DSM 19018 / LMG 30748 / EbN1) (Azoarcus sp. (strain EbN1)), this protein is Ribonuclease PH.